Consider the following 390-residue polypeptide: Dual-specificity RNA methyltransferase RlmN (390 aa).

Glutamate 126 acts as the Proton acceptor in catalysis. Residues 134–374 form the Radical SAM core domain; it reads TEDRGAVCLS…APVRTPRGQD (241 aa). A disulfide bridge links cysteine 141 with cysteine 379. [4Fe-4S] cluster is bound by residues cysteine 148, cysteine 152, and cysteine 155. Residues 205 to 206, serine 237, 259 to 261, and asparagine 336 each bind S-adenosyl-L-methionine; these read GE and SLH. Catalysis depends on cysteine 379, which acts as the S-methylcysteine intermediate.

The protein belongs to the radical SAM superfamily. RlmN family. The cofactor is [4Fe-4S] cluster.

It localises to the cytoplasm. It carries out the reaction adenosine(2503) in 23S rRNA + 2 reduced [2Fe-2S]-[ferredoxin] + 2 S-adenosyl-L-methionine = 2-methyladenosine(2503) in 23S rRNA + 5'-deoxyadenosine + L-methionine + 2 oxidized [2Fe-2S]-[ferredoxin] + S-adenosyl-L-homocysteine. The enzyme catalyses adenosine(37) in tRNA + 2 reduced [2Fe-2S]-[ferredoxin] + 2 S-adenosyl-L-methionine = 2-methyladenosine(37) in tRNA + 5'-deoxyadenosine + L-methionine + 2 oxidized [2Fe-2S]-[ferredoxin] + S-adenosyl-L-homocysteine. Functionally, specifically methylates position 2 of adenine 2503 in 23S rRNA and position 2 of adenine 37 in tRNAs. m2A2503 modification seems to play a crucial role in the proofreading step occurring at the peptidyl transferase center and thus would serve to optimize ribosomal fidelity. The sequence is that of Dual-specificity RNA methyltransferase RlmN from Acidiphilium cryptum (strain JF-5).